We begin with the raw amino-acid sequence, 319 residues long: Type II secretion system protein C 2 (319 aa).

At 1–42 (MARVVFRDARIYLIQWLTKIRHTLNQRQSLNTDKEHLRKIVR) the chain is on the cytoplasmic side. The chain crosses the membrane as a helical span at residues 43–65 (GMFWLMLLIISAKVAHSLWRYFS). At 66 to 319 (FSAEYTAVSP…ARHDISIALR (254 aa)) the chain is on the periplasmic side.

This sequence belongs to the GSP C family. Interacts with outer cell membrane protein GspD2 in the periplasm.

The protein resides in the cell inner membrane. In terms of biological role, involved in a type II secretion system (T2SS, formerly general secretion pathway, GSP) for the export of folded proteins across the outer membrane. The chain is Type II secretion system protein C 2 (gspC2) from Escherichia coli O78:H11 (strain H10407 / ETEC).